A 122-amino-acid polypeptide reads, in one-letter code: Large ribosomal subunit protein bL12 (122 aa).

The protein belongs to the bacterial ribosomal protein bL12 family. As to quaternary structure, homodimer. Part of the ribosomal stalk of the 50S ribosomal subunit. Forms a multimeric L10(L12)X complex, where L10 forms an elongated spine to which 2 to 4 L12 dimers bind in a sequential fashion. Binds GTP-bound translation factors.

Its function is as follows. Forms part of the ribosomal stalk which helps the ribosome interact with GTP-bound translation factors. Is thus essential for accurate translation. This Mycoplasma mycoides subsp. mycoides SC (strain CCUG 32753 / NCTC 10114 / PG1) protein is Large ribosomal subunit protein bL12.